A 355-amino-acid chain; its full sequence is MLCLGIETSCDETAVALVENGKCIGSILGTQAPLHALFGGVVPELASREHYRCLGPLYDKLMEDAKVTLADLDVIAVTRGPGLLGALLVGLAFAKGLALASGKTLIGINHLHAHLLVAAIEEPIEYPALGLLVSGGHTHIYKIDAPDIFILLARTLDDAAGEACDKFAKMLGLPYPGGVIIDKLAQQGIPDPYLFPRPYIHNSELDFSFSGLKTSAAMYLKQYPQLIEEGQRYCSNNSKVAIKEELYNVCSSYLLAISETLYIKMERALQKYTNEIKTIIVAGGLAANSFVRQAMHNLAINYNKKILLPEQKLCTDNAVMIAYYGELLAEKGYCHRLDLSAIPRGQHIPDDMVKV.

Positions 110 and 114 each coordinate Fe cation. Residues 132 to 136, D165, G178, D182, and N288 each bind substrate; that span reads LVSGG. A Fe cation-binding site is contributed by D316.

It belongs to the KAE1 / TsaD family. Fe(2+) is required as a cofactor.

It localises to the cytoplasm. The enzyme catalyses L-threonylcarbamoyladenylate + adenosine(37) in tRNA = N(6)-L-threonylcarbamoyladenosine(37) in tRNA + AMP + H(+). Required for the formation of a threonylcarbamoyl group on adenosine at position 37 (t(6)A37) in tRNAs that read codons beginning with adenine. Is involved in the transfer of the threonylcarbamoyl moiety of threonylcarbamoyl-AMP (TC-AMP) to the N6 group of A37, together with TsaE and TsaB. TsaD likely plays a direct catalytic role in this reaction. In Lawsonia intracellularis (strain PHE/MN1-00), this protein is tRNA N6-adenosine threonylcarbamoyltransferase.